The sequence spans 323 residues: Sphingolipid delta(4)-desaturase/C4-monooxygenase DES2 (323 aa).

Glycine 2 is lipidated: N-myristoyl glycine. A run of 2 helical transmembrane segments spans residues 45–65 (WTVT…QGLA) and 68–88 (WLFF…TLAI). The short motif at 89–93 (HDISH) is the Histidine box-1 element. The segment at 95–99 (TAFGT) is required for C4-hydroxylase activity. The short motif at 128-132 (HVDHH) is the Histidine box-2 element. The helical transmembrane segment at 209–231 (MVYLLASSLLGLGLHPISGHFVA) threads the bilayer. The Histidine box-3 signature appears at 259–263 (HMEHH).

This sequence belongs to the fatty acid desaturase type 1 family. DEGS subfamily.

Its subcellular location is the endoplasmic reticulum membrane. It catalyses the reaction a dihydroceramide + 2 Fe(II)-[cytochrome b5] + O2 + 2 H(+) = a phytoceramide + 2 Fe(III)-[cytochrome b5] + H2O. The enzyme catalyses an N-acylsphinganine + 2 Fe(II)-[cytochrome b5] + O2 + 2 H(+) = an N-acylsphing-4-enine + 2 Fe(III)-[cytochrome b5] + 2 H2O. It carries out the reaction N-octanoylsphinganine + 2 Fe(II)-[cytochrome b5] + O2 + 2 H(+) = N-octanoyl-4-hydroxysphinganine + 2 Fe(III)-[cytochrome b5] + H2O. The catalysed reaction is an N-acylsphinganine + 2 Fe(II)-[cytochrome b5] + O2 + 2 H(+) = an N-acyl-(4R)-4-hydroxysphinganine + 2 Fe(III)-[cytochrome b5] + H2O. Its pathway is membrane lipid metabolism; sphingolipid biosynthesis. Functionally, bifunctional enzyme which acts both as a sphingolipid delta(4)-desaturase and a sphingolipid C4-monooxygenase. The polypeptide is Sphingolipid delta(4)-desaturase/C4-monooxygenase DES2 (Bos taurus (Bovine)).